We begin with the raw amino-acid sequence, 138 residues long: MRTLWIVAVCLMGVEGHLTQFGDMINKKTGTFGLLSYVYYGCYCGLGGKGKPQDATDRCCFVHDCCYGTVNGCDPKLSTYSYSFQNGDIVCGDDDPCLRAVCECDRVAAICFGENMNTYDTKYMLHSLFDCMEESEKC.

The N-terminal stretch at 1 to 16 is a signal peptide; the sequence is MRTLWIVAVCLMGVEG. Cystine bridges form between C42–C131, C44–C60, C59–C111, C65–C138, C66–C104, C73–C97, and C91–C102. Ca(2+) is bound by residues Y43, G45, and G47. Residue H63 is part of the active site. D64 lines the Ca(2+) pocket. The active site involves D105.

Belongs to the phospholipase A2 family. Group II subfamily. D49 sub-subfamily. As to quaternary structure, does not form a complex. Requires Ca(2+) as cofactor. Expressed by the venom gland.

The protein localises to the secreted. The enzyme catalyses a 1,2-diacyl-sn-glycero-3-phosphocholine + H2O = a 1-acyl-sn-glycero-3-phosphocholine + a fatty acid + H(+). In terms of biological role, snake venom phospholipase A2 (PLA2) that is not toxic by itself, but the synergistical mixture of a basic and this acidic protein is lethal. PLA2 catalyzes the calcium-dependent hydrolysis of the 2-acyl groups in 3-sn-phosphoglycerides. The sequence is that of Acidic phospholipase A2 VP7 from Daboia palaestinae (Palestine viper).